Reading from the N-terminus, the 103-residue chain is Floral defensin-like protein 1 (103 aa).

The first 25 residues, 1 to 25, serve as a signal peptide directing secretion; that stretch reads MARSICFFAVAILALMLFAAYDAEA. 5 cysteine pairs are disulfide-bonded: C28–C72, C32–C48, C39–C59, C45–C66, and C49–C68. Positions 73 to 103 are cleaved as a propeptide — removed in mature form; sequence VFEKTEATQTETFTKDVNTLAEALLEADMMV.

It belongs to the DEFL family. When compared to other plant defensins, the petunia defensins have an additional fifth disulfide bond. Petals.

The protein resides in the secreted. The protein localises to the vacuole. Its function is as follows. Plant defense peptide with antifungal activity against F.oxysporum and B.cinerea. The chain is Floral defensin-like protein 1 (D1) from Petunia hybrida (Petunia).